The primary structure comprises 304 residues: Beta-lactamase AER-1 (304 aa).

A signal peptide spans 1–37; the sequence is MYVLSVEKPTLRNKFAAGIGVVLVCVVASFIPTPVFA. S83 (acyl-ester intermediate) is an active-site residue. Cysteines 90 and 137 form a disulfide. The tract at residues 173–195 is disordered; that stretch reads ETQLDRKEPELNEGTPGDVRDTT. 248–250 contacts substrate; the sequence is KTG.

Belongs to the class-A beta-lactamase family.

It carries out the reaction a beta-lactam + H2O = a substituted beta-amino acid. In terms of biological role, hydrolyzes carbenicillin. Methicillin and oxacillin are weakly hydrolyzed. The sequence is that of Beta-lactamase AER-1 (aer1) from Aeromonas hydrophila.